The primary structure comprises 563 residues: MPQPDKMAAVNNAMPQPAPEKSLSSDPQPESSKKSARFWLIFVAIALTTFLAALDTSIISTALPTITADLGSESLYVWIIDAYLLASTATIPIFAQAANIYGRRSLTLIAVCIFTLGSGLCGGAHNTAMMVGGRAVQGIGGGGILTMSEIVVCDMVSIRERGMYAGIIGGVWAIAAVVAPVMGGAFAQNISWRWIFYINLPIAGVSLVALGLFLKLARPPSGTVKEQMSRIDWGGSVLLIGSVTSIVLALSWGGSEHPWSGWQTIVPLVIGLLALVAFFAYQGAPWLREPTMPLRLFGNRTSSTLLVISFIHSLLLYWVCYFLPVYFQAVKEASPTRSAVMLFPIACTSAPAGVAAGITITKTGKYRVWHFTGFVLMSIACGLFTLLDAQSSTGRWVGFQILFGVGTGTVFTSTLPPILASLPDSDVATATGAWTFIRNFGSIWGVAIPAAVFNNQVNHAAPKISDSTVKSLLVDGGAYEHATQHFIKSLSPNPELKTQVIQVYLEGLKVVWQVSLAFCLLGFILCFFVRSLTLRDELNTEFGLKEEKPNSKNMSSEEGVVRE.

Residues 1–30 (MPQPDKMAAVNNAMPQPAPEKSLSSDPQPE) are disordered. The next 5 helical transmembrane spans lie at 39 to 59 (WLIF…TSII), 75 to 95 (LYVW…PIFA), 105 to 125 (SLTL…GGAH), 138 to 158 (GIGG…MVSI), and 167 to 187 (IIGG…GAFA). N-linked (GlcNAc...) asparagine glycosylation is present at Asn189. The next 3 helical transmembrane spans lie at 194-214 (WIFY…GLFL), 233-253 (WGGS…LSWG), and 261-281 (GWQT…FFAY). Asn299 carries N-linked (GlcNAc...) asparagine glycosylation. 6 consecutive transmembrane segments (helical) span residues 305–325 (LLVI…FLPV), 340–360 (VMLF…GITI), 368–388 (VWHF…TLLD), 401–421 (ILFG…ILAS), 433–453 (AWTF…AAVF), and 509–529 (KVVW…CFFV). A glycan (N-linked (GlcNAc...) asparagine) is linked at Asn553.

The protein belongs to the major facilitator superfamily. TCR/Tet family.

The protein localises to the membrane. In terms of biological role, efflux pump; part of the gene cluster that mediates the biosynthesis of the mycotoxin fusarin C. Within the cluster, FUS1, FUS2, FUS8 and FUS9 are sufficient for fusarin production. The other FUS cluster members are not essential for fusarin C biosynthesis. The polypeptide is Efflux pump FUS6 (Gibberella moniliformis (strain M3125 / FGSC 7600) (Maize ear and stalk rot fungus)).